The primary structure comprises 364 residues: Alanine racemase (364 aa).

K34 acts as the Proton acceptor; specific for D-alanine in catalysis. K34 bears the N6-(pyridoxal phosphate)lysine mark. Residue R129 participates in substrate binding. Y259 functions as the Proton acceptor; specific for L-alanine in the catalytic mechanism. M307 is a substrate binding site.

Belongs to the alanine racemase family. The cofactor is pyridoxal 5'-phosphate.

The enzyme catalyses L-alanine = D-alanine. It participates in amino-acid biosynthesis; D-alanine biosynthesis; D-alanine from L-alanine: step 1/1. Catalyzes the interconversion of L-alanine and D-alanine. May also act on other amino acids. The polypeptide is Alanine racemase (alr) (Coxiella burnetii (strain RSA 493 / Nine Mile phase I)).